The following is an 88-amino-acid chain: Large ribosomal subunit protein bL27 (88 aa).

The disordered stretch occupies residues 1–22 (MAQKKAGGSSRNGRDSAGRRLG).

Belongs to the bacterial ribosomal protein bL27 family.

In Gluconobacter oxydans (strain 621H) (Gluconobacter suboxydans), this protein is Large ribosomal subunit protein bL27.